We begin with the raw amino-acid sequence, 29 residues long: Cycloviolacin-O22 (29 aa).

A cross-link (cyclopeptide (Gly-Asn)) is located at residues 1 to 29 (GLPICGETCVGGTCNTPGCTCSWPVCTRN). Intrachain disulfides connect Cys-5–Cys-19, Cys-9–Cys-21, and Cys-14–Cys-26.

In terms of processing, this is a cyclic peptide. In terms of tissue distribution, expressed in roots and runners but not in leaves, petals and petioles (at protein level).

Probably participates in a plant defense mechanism. In Viola odorata (Sweet violet), this protein is Cycloviolacin-O22.